Consider the following 741-residue polypeptide: Catalase-peroxidase (741 aa).

The N-terminal stretch at 1 to 23 (MLKKIITALGMSGMLLASSNAIA) is a signal peptide. The segment at residues 102-223 (WHDAGTYRIY…YAATQMGLIY (122 aa)) is a cross-link (tryptophyl-tyrosyl-methioninium (Trp-Tyr) (with M-249)). His103 (proton acceptor) is an active-site residue. The segment at residues 223-249 (YVNPEGPDGKPDIKGAASEIRQAFRAM) is a cross-link (tryptophyl-tyrosyl-methioninium (Tyr-Met) (with W-102)). Residue His264 coordinates heme b.

It belongs to the peroxidase family. Peroxidase/catalase subfamily. Homodimer or homotetramer. Requires heme b as cofactor. Post-translationally, formation of the three residue Trp-Tyr-Met cross-link is important for the catalase, but not the peroxidase activity of the enzyme.

The enzyme catalyses H2O2 + AH2 = A + 2 H2O. The catalysed reaction is 2 H2O2 = O2 + 2 H2O. Bifunctional enzyme with both catalase and broad-spectrum peroxidase activity. The chain is Catalase-peroxidase from Francisella tularensis subsp. holarctica (strain FTNF002-00 / FTA).